The sequence spans 346 residues: N-acetyl-gamma-glutamyl-phosphate reductase (346 aa).

The active site involves Cys-149.

It belongs to the NAGSA dehydrogenase family. Type 1 subfamily.

The protein resides in the cytoplasm. The catalysed reaction is N-acetyl-L-glutamate 5-semialdehyde + phosphate + NADP(+) = N-acetyl-L-glutamyl 5-phosphate + NADPH + H(+). It participates in amino-acid biosynthesis; L-arginine biosynthesis; N(2)-acetyl-L-ornithine from L-glutamate: step 3/4. Its function is as follows. Catalyzes the NADPH-dependent reduction of N-acetyl-5-glutamyl phosphate to yield N-acetyl-L-glutamate 5-semialdehyde. The protein is N-acetyl-gamma-glutamyl-phosphate reductase of Geobacter metallireducens (strain ATCC 53774 / DSM 7210 / GS-15).